Reading from the N-terminus, the 265-residue chain is NAD kinase 1 (265 aa).

Residue Asp-45 is the Proton acceptor of the active site. NAD(+) contacts are provided by residues 45 to 46 (DG), His-50, 122 to 123 (NE), Arg-148, Asp-150, and Ala-185.

This sequence belongs to the NAD kinase family. A divalent metal cation is required as a cofactor.

It is found in the cytoplasm. It catalyses the reaction NAD(+) + ATP = ADP + NADP(+) + H(+). Functionally, involved in the regulation of the intracellular balance of NAD and NADP, and is a key enzyme in the biosynthesis of NADP. Catalyzes specifically the phosphorylation on 2'-hydroxyl of the adenosine moiety of NAD to yield NADP. The sequence is that of NAD kinase 1 from Halalkalibacterium halodurans (strain ATCC BAA-125 / DSM 18197 / FERM 7344 / JCM 9153 / C-125) (Bacillus halodurans).